A 175-amino-acid chain; its full sequence is Ribosome maturation factor RimM (175 aa).

A PRC barrel domain is found at 98–172; sequence DGEFHVRDLQ…WLLITPPKGL (75 aa).

It belongs to the RimM family. Binds ribosomal protein uS19.

The protein localises to the cytoplasm. In terms of biological role, an accessory protein needed during the final step in the assembly of 30S ribosomal subunit, possibly for assembly of the head region. Essential for efficient processing of 16S rRNA. May be needed both before and after RbfA during the maturation of 16S rRNA. It has affinity for free ribosomal 30S subunits but not for 70S ribosomes. This Synechococcus sp. (strain RCC307) protein is Ribosome maturation factor RimM.